The following is a 458-amino-acid chain: ATP synthase subunit beta (458 aa).

Residue 148–155 participates in ATP binding; that stretch reads GGAGVGKT.

Belongs to the ATPase alpha/beta chains family. F-type ATPases have 2 components, CF(1) - the catalytic core - and CF(0) - the membrane proton channel. CF(1) has five subunits: alpha(3), beta(3), gamma(1), delta(1), epsilon(1). CF(0) has three main subunits: a(1), b(2) and c(9-12). The alpha and beta chains form an alternating ring which encloses part of the gamma chain. CF(1) is attached to CF(0) by a central stalk formed by the gamma and epsilon chains, while a peripheral stalk is formed by the delta and b chains.

It localises to the cell inner membrane. It carries out the reaction ATP + H2O + 4 H(+)(in) = ADP + phosphate + 5 H(+)(out). In terms of biological role, produces ATP from ADP in the presence of a proton gradient across the membrane. The catalytic sites are hosted primarily by the beta subunits. The chain is ATP synthase subunit beta from Laribacter hongkongensis (strain HLHK9).